A 44-amino-acid chain; its full sequence is Photosystem I reaction center subunit IX (44 aa).

The chain crosses the membrane as a helical span at residues 9–29 (FIRSAPVVAAVWLSLTAGIII).

The protein belongs to the PsaJ family.

The protein localises to the cellular thylakoid membrane. Functionally, may help in the organization of the PsaE and PsaF subunits. This chain is Photosystem I reaction center subunit IX, found in Prochlorococcus marinus subsp. pastoris (strain CCMP1986 / NIES-2087 / MED4).